The following is a 966-amino-acid chain: LRR receptor-like serine/threonine-protein kinase ERL1 (966 aa).

A signal peptide spans 1 to 25 (MKEKMQRMVLSLAMVGFMVFGVASA). Topologically, residues 26 to 582 (MNNEGKALMA…PLPKSRVFSR (557 aa)) are extracellular. The stretch at 40–63 (FSNLVNMLLDWDDVHNSDLCSWRG) is one LRR 1 repeat. N-linked (GlcNAc...) asparagine glycans are attached at residues N68 and N77. LRR repeat units follow at residues 75-94 (SLNL…IGDL), 95-118 (RNLQ…IGNC), 120-142 (SLVY…ISKL), 143-166 (KQLE…LTQI), 168-190 (NLKR…LYWN), 192-214 (VLQY…MCQL), 215-238 (TGLW…IGNC), 239-261 (TSFQ…NIGF), 262-285 (LQVA…IGLM), 286-311 (QALA…NLSF), 313-333 (GKLY…LGNM), 334-357 (SRLS…LGKL), 359-381 (QLFE…ISSC), 383-404 (ALNQ…AFRN), 405-429 (LGSL…LGHI), 431-453 (NLDK…LGDL), 454-476 (EHLL…EFGN), 478-500 (RSIQ…ELGQ), 501-525 (LQNL…LTNC), and 527-550 (TLVN…NFSR). N226 and N237 each carry an N-linked (GlcNAc...) asparagine glycan. 2 N-linked (GlcNAc...) asparagine glycosylation sites follow: N308 and N332. Residue N377 is glycosylated (N-linked (GlcNAc...) asparagine). N-linked (GlcNAc...) asparagine glycosylation is found at N412, N441, and N460. 3 N-linked (GlcNAc...) asparagine glycosylation sites follow: N532, N537, and N547. The chain crosses the membrane as a helical span at residues 583–603 (GALICIVLGVITLLCMIFLAV). Residues 604-966 (YKSMQQKKIL…FREVISKSSI (363 aa)) are Cytoplasmic-facing. Residues T637 and T645 each carry the phosphothreonine modification. Residues 648–921 (LNEKFIIGYG…RVLLSLVPSL (274 aa)) form the Protein kinase domain. ATP contacts are provided by residues 654-662 (IGYGASSTV) and K676. 2 positions are modified to phosphotyrosine: Y721 and Y760. The active-site Proton acceptor is the D773. At Y815 the chain carries Phosphotyrosine. T823 carries the post-translational modification Phosphothreonine.

This sequence belongs to the protein kinase superfamily. Ser/Thr protein kinase family. In terms of assembly, homodimer and heterodimer with ERECTA and TMM. Interacts with EPF1 and EPF2. Interacts with SERK1, SERK2, SERK3/BAK1 and SERK4 in a EPF1-induced manner. In terms of tissue distribution, mostly expressed in developing organs, including bud clusters, flowers, siliques and young rosettes. Also detected in mature aboveground organs, such as leaves, stems and pedicels, but barely in roots.

It is found in the cell membrane. It catalyses the reaction L-seryl-[protein] + ATP = O-phospho-L-seryl-[protein] + ADP + H(+). The catalysed reaction is L-threonyl-[protein] + ATP = O-phospho-L-threonyl-[protein] + ADP + H(+). Functionally, receptor kinase that regulates inflorescence architecture and organ shape as well as stomatal patterning, including density and clustering, together with ER and ERL2. Redundantly involved with ER in procambial development regulation. Forms a functional ligand-receptor pair with EPF1 (AC Q8S8I4). Forms a constitutive complex with TMM involved in the recognition of the stomatal regulatory peptides EPF1, EPF2 and EPFL9/STOMAGEN. This chain is LRR receptor-like serine/threonine-protein kinase ERL1, found in Arabidopsis thaliana (Mouse-ear cress).